The sequence spans 541 residues: MAGAIIENMSTRKLCIVGGILLVFQVIAFLVGGLIAPSPTTAVPYMSVKCIDVRKNHHKTKWLMPWGPNHCEKLKDFDEAVSRQIEANDIVFAVHIPLPSKEMSPWFQFMLFIMQLDIAFKMDNDLKENAEITLDVSLAYRDDMFNDWEEIAHAIEIRKLKCTFGSPKTLESEGRHYDCDFLPFMEIGSVAHKYYLINIRLPVNERKGINVGIGEVKDIRLVGIHQNGGFTKVWFAMKTFLTPSILIIMVWYWRRITLMTRAPVLLEKVIFALGISMTFINIPVEWFSIGFDWTWMLLFGDIRQGIFYAMLLSFWIIFCGEHMMDQNERNRLSGYWKQVGPIAVGSFCLFIFDMCERGVQLKNPFYSIWTTEVGTELAMAFIIVAGICLCLYFLFLCFMVFQVFRNISGKQSSLPAMSKARRLHYEGLIFRFKFLMLITLACAAMTVIFFIVSQVTEGHWKWGDITIQVNSAFFTGIYGMWNLYVFALMFLYAPSHKNYGEDQSNGDLGVSSGEELQLTTTITHVDGPTEVYKLARKEAQE.

Residues 1–42 (MAGAIIENMSTRKLCIVGGILLVFQVIAFLVGGLIAPSPTTA) form the signal peptide. Topologically, residues 43 to 232 (VPYMSVKCID…GIHQNGGFTK (190 aa)) are lumenal. Residues 233 to 253 (VWFAMKTFLTPSILIIMVWYW) form a helical membrane-spanning segment. The Cytoplasmic segment spans residues 254 to 268 (RRITLMTRAPVLLEK). The helical transmembrane segment at 269-289 (VIFALGISMTFINIPVEWFSI) threads the bilayer. Residues 290-303 (GFDWTWMLLFGDIR) are Lumenal-facing. A helical transmembrane segment spans residues 304-324 (QGIFYAMLLSFWIIFCGEHMM). Residues 325 to 331 (DQNERNR) lie on the Cytoplasmic side of the membrane. Residues 332 to 352 (LSGYWKQVGPIAVGSFCLFIF) traverse the membrane as a helical segment. At 353–380 (DMCERGVQLKNPFYSIWTTEVGTELAMA) the chain is on the lumenal side. Residues 381–401 (FIIVAGICLCLYFLFLCFMVF) traverse the membrane as a helical segment. Residues 402–431 (QVFRNISGKQSSLPAMSKARRLHYEGLIFR) lie on the Cytoplasmic side of the membrane. A helical transmembrane segment spans residues 432 to 452 (FKFLMLITLACAAMTVIFFIV). Over 453 to 471 (SQVTEGHWKWGDITIQVNS) the chain is Lumenal. A helical membrane pass occupies residues 472–492 (AFFTGIYGMWNLYVFALMFLY). Topologically, residues 493–541 (APSHKNYGEDQSNGDLGVSSGEELQLTTTITHVDGPTEVYKLARKEAQE) are cytoplasmic.

Belongs to the wntless family.

The protein resides in the golgi apparatus membrane. The protein localises to the cytoplasmic vesicle membrane. May play an essential role in Wnt signaling pathway. May be required for Wnt-dependent patterning processes. This chain is Protein wntless homolog (WLS), found in Gallus gallus (Chicken).